We begin with the raw amino-acid sequence, 224 residues long: Thiamine-phosphate synthase (224 aa).

4-amino-2-methyl-5-(diphosphooxymethyl)pyrimidine-binding positions include 44 to 48 (QFREK) and N79. Residues D80 and D99 each coordinate Mg(2+). Residue S117 participates in 4-amino-2-methyl-5-(diphosphooxymethyl)pyrimidine binding. 143–145 (TET) lines the 2-[(2R,5Z)-2-carboxy-4-methylthiazol-5(2H)-ylidene]ethyl phosphate pocket. 4-amino-2-methyl-5-(diphosphooxymethyl)pyrimidine is bound at residue K146. 2-[(2R,5Z)-2-carboxy-4-methylthiazol-5(2H)-ylidene]ethyl phosphate-binding positions include G175 and 195 to 196 (IS).

It belongs to the thiamine-phosphate synthase family. Requires Mg(2+) as cofactor.

The enzyme catalyses 2-[(2R,5Z)-2-carboxy-4-methylthiazol-5(2H)-ylidene]ethyl phosphate + 4-amino-2-methyl-5-(diphosphooxymethyl)pyrimidine + 2 H(+) = thiamine phosphate + CO2 + diphosphate. It catalyses the reaction 2-(2-carboxy-4-methylthiazol-5-yl)ethyl phosphate + 4-amino-2-methyl-5-(diphosphooxymethyl)pyrimidine + 2 H(+) = thiamine phosphate + CO2 + diphosphate. It carries out the reaction 4-methyl-5-(2-phosphooxyethyl)-thiazole + 4-amino-2-methyl-5-(diphosphooxymethyl)pyrimidine + H(+) = thiamine phosphate + diphosphate. It functions in the pathway cofactor biosynthesis; thiamine diphosphate biosynthesis; thiamine phosphate from 4-amino-2-methyl-5-diphosphomethylpyrimidine and 4-methyl-5-(2-phosphoethyl)-thiazole: step 1/1. Its function is as follows. Condenses 4-methyl-5-(beta-hydroxyethyl)thiazole monophosphate (THZ-P) and 2-methyl-4-amino-5-hydroxymethyl pyrimidine pyrophosphate (HMP-PP) to form thiamine monophosphate (TMP). The chain is Thiamine-phosphate synthase from Bacillus licheniformis (strain ATCC 14580 / DSM 13 / JCM 2505 / CCUG 7422 / NBRC 12200 / NCIMB 9375 / NCTC 10341 / NRRL NRS-1264 / Gibson 46).